Here is a 755-residue protein sequence, read N- to C-terminus: Tryptophan 2-monooxygenase (755 aa).

FMN-binding residues include Ser247, Glu267, Lys275, and Arg295. Residue Arg295 coordinates substrate.

It belongs to the tryptophan 2-monooxygenase family. FMN is required as a cofactor.

The catalysed reaction is L-tryptophan + O2 = indole-3-acetamide + CO2 + H2O. Its pathway is plant hormone metabolism; auxin biosynthesis. This Agrobacterium tumefaciens (strain Ach5) protein is Tryptophan 2-monooxygenase (tms1).